The following is a 147-amino-acid chain: Large ribosomal subunit protein bL9 (147 aa).

It belongs to the bacterial ribosomal protein bL9 family.

Binds to the 23S rRNA. This chain is Large ribosomal subunit protein bL9, found in Citrifermentans bemidjiense (strain ATCC BAA-1014 / DSM 16622 / JCM 12645 / Bem) (Geobacter bemidjiensis).